The primary structure comprises 355 residues: tRNA pseudouridine synthase D (355 aa).

Residue D84 is the Nucleophile of the active site. Residues 160-306 enclose the TRUD domain; sequence GVPNYFGLQR…MAHERRILRL (147 aa).

The protein belongs to the pseudouridine synthase TruD family.

The enzyme catalyses uridine(13) in tRNA = pseudouridine(13) in tRNA. Functionally, responsible for synthesis of pseudouridine from uracil-13 in transfer RNAs. This is tRNA pseudouridine synthase D from Pseudomonas aeruginosa (strain LESB58).